The primary structure comprises 1093 residues: MPGVIMDNATVGRLGHAPDTQTPSNGDNLRNGSLHINGAAKGDKDHDPDKESYTGKPKIDGHRALPELPHITQGFFPFSTLVNRYVQQCWNELSDLITELAAIQVSPHSSMPLLPANGKSPGNQSPENVQKKLRILDFAHAKRAEFIKLLVLSQWSRRAHDVSKLIDLQNFIRSRHQAFVDALQRVGEMKRDLVQAQVANPDLQTALEILSKGRLESLADLGYKSSKLLTARGALKRLHRINRIISARLALHDSIPHPFRTYRVHDGRVTFVVRGEFELDLSVGAESELSQFFFVDIRFLYSPSSNIPNGRMSNEIDAKINDKLRDSGLTGCFNFLHGLVLTNKIHILFKQAIELAKGLWSETLRVELLHRTLVIQYWALKPGPKSWVEIGVKSGNGDADSQGVGVPCLGLRWMRDGQEVDSRDIEFDPEDLSMECLLRSVIALHISYLLSSAYGILSEYSLFSTGTLSSQAILNVTEPGECQLSVQLTGSRHLRVSIEPMSGAVTLSATPGLSERSESDASLDRSTIDDLVARVSRLRCIAAIEELESNVRILGFETVSPKGLRNEIRTVFPANVLRFSLFWHPSWERNWVVAATSSITGDNWWVVQLRRSSEVATDFSVSDTSVPLCSGHSMSDTFLATSHQTRSSSFPDLGYCLSGMVAIYANVSYLSDLQSVEFHPPLCALKVESDLQIPDIFIRYQVSKLPRALQLVLPAGLKRKNLLKDTVRLAFHGIDRHKNSAIFVAYGNLVGPWTDLCTLVSKSDSSLVFKRGGSGFALRLLAPAGRPVIVQLFKSLQTLECTLSILDFLRQRRLTPQSLSLTHIAFAYGPRRDLSAIIGIGLSEVPSSAELDPVRILARTDPLLFLTLGIRFKHPNPHRRVQGSLAAILNHASNEAGLDFVTEILSFTLPLMRALEQITSNASRQESFRLQVIVRNACTFLLHYTYQGFRFQLTTSQHSGQLTWVLRELSSPGAGPGHDQLKARLRGTLYHSNGNGWKGLGNGVVADVEGVSNVIWALDGCFTGAQHNTWLPRETKSDQDYSTQPVPEKQSQTGAPSQAAMANDTTITANFVNDKSLQRNPVASNAADVITID.

Disordered stretches follow at residues 1–61 (MPGV…KIDG) and 1035–1060 (TKSD…SQAA). The span at 19-31 (DTQTPSNGDNLRN) shows a compositional bias: polar residues. A compositionally biased stretch (basic and acidic residues) spans 41–61 (KGDKDHDPDKESYTGKPKIDG). Over residues 1040–1056 (DYSTQPVPEKQSQTGAP) the composition is skewed to polar residues.

Belongs to the Mediator complex subunit 14 family. Component of the Mediator complex.

It localises to the nucleus. In terms of biological role, component of the Mediator complex, a coactivator involved in the regulated transcription of nearly all RNA polymerase II-dependent genes. Mediator functions as a bridge to convey information from gene-specific regulatory proteins to the basal RNA polymerase II transcription machinery. Mediator is recruited to promoters by direct interactions with regulatory proteins and serves as a scaffold for the assembly of a functional preinitiation complex with RNA polymerase II and the general transcription factors. The sequence is that of Mediator of RNA polymerase II transcription subunit 14 (rgr1) from Neosartorya fischeri (strain ATCC 1020 / DSM 3700 / CBS 544.65 / FGSC A1164 / JCM 1740 / NRRL 181 / WB 181) (Aspergillus fischerianus).